A 1112-amino-acid chain; its full sequence is MSLIGNGPSVPPSSTKASLFSSPTTSANPTGGLFGSTTGGSSLFAPKTAGSTTTSTTQPTSTTGLGTSLFGTSTTANTQNTANAARPSLFTAGNSIFGTSTTQPGLGASSLTTAATSNQQAQQQQQQRQQHQQAAPTGALFDSLLARNKKQAEGETALGELPSLQLGLADLRQRLRKLGPSSDRPIEPGKAHYFLAASGVDPGAAVRDLGALGLQAKTERTAASVGPAAGPSGVSTTGFGTGLGEVDVDTYLSNLQTKTTLSMIADGLERSARDFDAFLEENVTLEWEAQRKRIYQHFGIKPRDSSVAGTTTAQPTATPSKDGQGTFGRSRRKASQPPPGERPAQRMSILGRSTMMRSVIGTPTRIGAHAPEFSDVEARKDSSGAAVASVDDRFLREKQAKLAEKIREFNDARQRGTPFYICRDLADLESKSGDRHGPHIVEAYRAVMEMVGEHPDAGEAPRERQFAKMYLDPNTQSANALAMRKQILKGATTFLEKQFWNEVNSLIAKYPQDANLGGLPDVVSKIKAYIRLRIARKTLVPDNVELQQINGEYVWAIVFYLLRAGFVTEAAQYVNSNQAHFRAIDRTFSGYINSYASSEERRLKRQMQDRCMSEYNQRIRNAPEGSIDPFRMACYKIIGRCDLSNRSLDGLQTDVNDWIWLQFNLARETDRSLELAGESYGLAELQASIREIGLKHFPKTAAEDTNGSFGMFFYLQILAGMFEQAIAYLYPFSYVDAVHFAIALTYYGLLRPVDAASAGNELLSHNTRSMPQINFGRMLGYYTRDFRAANPAAAVDYLVLICLNADEAAGGQQAQAALCHEALRELVLESREFSRLIGDIRPDGRRIRGVIEERGPLIALGQEDDFIRTITLQAASFADDNGRTTDAVLLYHLAEDYDTVVSIVSRALSEAISLEIGEDPMRLIPVKPRVTNAEGQVEEAAPGSSLSLAAIDDPVELAKAMMGMYERDHMFWQKIREPNRVACSVLLQMADIKSLVEQGRWAECLDKIRALDILPLTARGDPGTIRSYAARFPSLAQPVAINVPNLLMWTVLCCMRQRERLAGGQFAGNESTARLMMDELKQMTVDLMAYTSQLRYRLPPHLHEALARASAD.

3 disordered regions span residues 1-74 (MSLI…GTST), 101-136 (TTQP…QAAP), and 303-350 (RDSS…MSIL). Positions 12 to 29 (PSSTKASLFSSPTTSANP) are enriched in polar residues. The segment covering 39–74 (GGSSLFAPKTAGSTTTSTTQPTSTTGLGTSLFGTST) has biased composition (low complexity). Over residues 101–118 (TTQPGLGASSLTTAATSN) the composition is skewed to polar residues. A coiled-coil region spans residues 113-135 (TAATSNQQAQQQQQQRQQHQQAA). Low complexity-rich tracts occupy residues 119–135 (QQAQ…QQAA) and 310–319 (TTTAQPTATP). Residues 394-415 (FLREKQAKLAEKIREFNDARQR) adopt a coiled-coil conformation.

Belongs to the nucleoporin interacting component (NIC) family. In terms of assembly, component of the nuclear pore complex (NPC). NPC constitutes the exclusive means of nucleocytoplasmic transport. NPCs allow the passive diffusion of ions and small molecules and the active, nuclear transport receptor-mediated bidirectional transport of macromolecules such as proteins, RNAs, ribonucleoparticles (RNPs), and ribosomal subunits across the nuclear envelope. Due to its 8-fold rotational symmetry, all subunits are present with 8 copies or multiples thereof. Part of a tetrameric NUP192-NUP170-NIC96-NUP53 or NUP188-NUP170-NIC96-NUP53 module.

The protein localises to the nucleus. Its subcellular location is the nuclear pore complex. The protein resides in the nucleus membrane. Functions as a component of the nuclear pore complex (NPC). NPC components, collectively referred to as nucleoporins (NUPs), can play the role of both NPC structural components and of docking or interaction partners for transiently associated nuclear transport factors. NIC96, which is localized to the core of the NPC and the distal ring of the nuclear basket, is required for de novo assembly of NPCs. This Chaetomium thermophilum (strain DSM 1495 / CBS 144.50 / IMI 039719) (Thermochaetoides thermophila) protein is Nucleoporin NIC96 (NIC96).